The primary structure comprises 309 residues: tRNA uridine(34) hydroxylase (309 aa).

A Rhodanese domain is found at arginine 137 to leucine 232. The active-site Cysteine persulfide intermediate is cysteine 192.

It belongs to the TrhO family.

It carries out the reaction uridine(34) in tRNA + AH2 + O2 = 5-hydroxyuridine(34) in tRNA + A + H2O. Functionally, catalyzes oxygen-dependent 5-hydroxyuridine (ho5U) modification at position 34 in tRNAs. The polypeptide is tRNA uridine(34) hydroxylase (Corynebacterium jeikeium (strain K411)).